Here is a 95-residue protein sequence, read N- to C-terminus: Co-chaperonin GroES (95 aa).

The protein belongs to the GroES chaperonin family. As to quaternary structure, heptamer of 7 subunits arranged in a ring. Interacts with the chaperonin GroEL.

The protein resides in the cytoplasm. In terms of biological role, together with the chaperonin GroEL, plays an essential role in assisting protein folding. The GroEL-GroES system forms a nano-cage that allows encapsulation of the non-native substrate proteins and provides a physical environment optimized to promote and accelerate protein folding. GroES binds to the apical surface of the GroEL ring, thereby capping the opening of the GroEL channel. This Methylocella silvestris (strain DSM 15510 / CIP 108128 / LMG 27833 / NCIMB 13906 / BL2) protein is Co-chaperonin GroES.